The following is a 434-amino-acid chain: Glutamyl-tRNA reductase (434 aa).

Substrate-binding positions include 49–52 (TCNR), Ser-109, 114–116 (EPQ), and Gln-120. Cys-50 serves as the catalytic Nucleophile. 189-194 (GAGEMC) is a binding site for NADP(+).

Belongs to the glutamyl-tRNA reductase family. As to quaternary structure, homodimer.

It catalyses the reaction (S)-4-amino-5-oxopentanoate + tRNA(Glu) + NADP(+) = L-glutamyl-tRNA(Glu) + NADPH + H(+). The protein operates within porphyrin-containing compound metabolism; protoporphyrin-IX biosynthesis; 5-aminolevulinate from L-glutamyl-tRNA(Glu): step 1/2. Catalyzes the NADPH-dependent reduction of glutamyl-tRNA(Glu) to glutamate 1-semialdehyde (GSA). The chain is Glutamyl-tRNA reductase from Geotalea uraniireducens (strain Rf4) (Geobacter uraniireducens).